A 252-amino-acid polypeptide reads, in one-letter code: Small ribosomal subunit protein uS2 (252 aa).

This sequence belongs to the universal ribosomal protein uS2 family. In terms of assembly, component of the small ribosomal subunit. Mature ribosomes consist of a small (40S) and a large (60S) subunit. The 40S subunit contains about 33 different proteins and 1 molecule of RNA (18S). The 60S subunit contains about 49 different proteins and 3 molecules of RNA (25S, 5.8S and 5S). Interacts with RPS21.

It localises to the cytoplasm. Functionally, required for the assembly and/or stability of the 40S ribosomal subunit. Required for the processing of the 20S rRNA-precursor to mature 18S rRNA in a late step of the maturation of 40S ribosomal subunits. This Encephalitozoon cuniculi (strain GB-M1) (Microsporidian parasite) protein is Small ribosomal subunit protein uS2.